We begin with the raw amino-acid sequence, 137 residues long: Small ribosomal subunit protein eS19 (137 aa).

The protein belongs to the eukaryotic ribosomal protein eS19 family. As to quaternary structure, component of the small ribosomal subunit.

Its subcellular location is the cytoplasm. The protein is Small ribosomal subunit protein eS19 (RPS19) of Encephalitozoon cuniculi (strain GB-M1) (Microsporidian parasite).